The primary structure comprises 237 residues: Ribosomal RNA small subunit methyltransferase G (237 aa).

S-adenosyl-L-methionine is bound by residues glycine 78, phenylalanine 83, 129–130 (AE), and arginine 148. Residues 218–237 (KKETPNKYPRKAGMPNKRPL) form a disordered region.

It belongs to the methyltransferase superfamily. RNA methyltransferase RsmG family.

Its subcellular location is the cytoplasm. Functionally, specifically methylates the N7 position of a guanine in 16S rRNA. In Streptococcus pneumoniae (strain ATCC BAA-255 / R6), this protein is Ribosomal RNA small subunit methyltransferase G.